We begin with the raw amino-acid sequence, 160 residues long: Ribosomal RNA large subunit methyltransferase H (160 aa).

Residues leucine 76, glycine 108, and 127 to 132 each bind S-adenosyl-L-methionine; that span reads LGKLTW.

Belongs to the RNA methyltransferase RlmH family. Homodimer.

It localises to the cytoplasm. The catalysed reaction is pseudouridine(1915) in 23S rRNA + S-adenosyl-L-methionine = N(3)-methylpseudouridine(1915) in 23S rRNA + S-adenosyl-L-homocysteine + H(+). Its function is as follows. Specifically methylates the pseudouridine at position 1915 (m3Psi1915) in 23S rRNA. The sequence is that of Ribosomal RNA large subunit methyltransferase H from Agrobacterium fabrum (strain C58 / ATCC 33970) (Agrobacterium tumefaciens (strain C58)).